Reading from the N-terminus, the 228-residue chain is L-ribulose-5-phosphate 4-epimerase UlaF (228 aa).

Residues 26 to 27, 43 to 44, and 72 to 73 each bind substrate; these read GN, SG, and SS. Zn(2+) contacts are provided by D74, H93, and H95. The Proton donor/acceptor role is filled by D118. H167 is a Zn(2+) binding site. Y225 functions as the Proton donor/acceptor in the catalytic mechanism.

Belongs to the aldolase class II family. AraD/FucA subfamily. It depends on Zn(2+) as a cofactor.

The enzyme catalyses L-ribulose 5-phosphate = D-xylulose 5-phosphate. Its pathway is cofactor degradation; L-ascorbate degradation; D-xylulose 5-phosphate from L-ascorbate: step 4/4. Functionally, catalyzes the isomerization of L-ribulose 5-phosphate to D-xylulose 5-phosphate. Is involved in the anaerobic L-ascorbate utilization. In Escherichia coli (strain 55989 / EAEC), this protein is L-ribulose-5-phosphate 4-epimerase UlaF.